We begin with the raw amino-acid sequence, 246 residues long: Probable transcriptional regulatory protein RB5500 (246 aa).

It belongs to the TACO1 family.

Its subcellular location is the cytoplasm. This Rhodopirellula baltica (strain DSM 10527 / NCIMB 13988 / SH1) protein is Probable transcriptional regulatory protein RB5500.